The sequence spans 155 residues: Ribosome maturation factor RimP (155 aa).

This sequence belongs to the RimP family.

The protein localises to the cytoplasm. Required for maturation of 30S ribosomal subunits. In Prochlorococcus marinus (strain MIT 9211), this protein is Ribosome maturation factor RimP.